We begin with the raw amino-acid sequence, 352 residues long: Ion-translocating oxidoreductase complex subunit D (352 aa).

Transmembrane regions (helical) follow at residues 20–40, 42–62, 89–109, and 123–143; these read IMLL…WFFG, GTLV…ALVL, IPPL…VIIA, and PAMI…TSWL. Position 187 is an FMN phosphoryl threonine (T187). The next 5 membrane-spanning stretches (helical) occupy residues 214 to 234, 242 to 262, 267 to 287, 301 to 321, and 322 to 342; these read ILAG…GVWL, WHIP…GWLF, LASP…FFIL, LIFG…GGYP, and DGVA…DYYT.

It belongs to the NqrB/RnfD family. The complex is composed of six subunits: RsxA, RsxB, RsxC, RsxD, RsxE and RsxG. FMN serves as cofactor.

The protein localises to the cell inner membrane. Functionally, part of a membrane-bound complex that couples electron transfer with translocation of ions across the membrane. Required to maintain the reduced state of SoxR. The protein is Ion-translocating oxidoreductase complex subunit D of Escherichia coli O17:K52:H18 (strain UMN026 / ExPEC).